The sequence spans 90 residues: Probable Fe(2+)-trafficking protein (90 aa).

This sequence belongs to the Fe(2+)-trafficking protein family. Monomer.

Could be a mediator in iron transactions between iron acquisition and iron-requiring processes, such as synthesis and/or repair of Fe-S clusters in biosynthetic enzymes. The polypeptide is Probable Fe(2+)-trafficking protein (Pectobacterium atrosepticum (strain SCRI 1043 / ATCC BAA-672) (Erwinia carotovora subsp. atroseptica)).